The sequence spans 570 residues: Formate--tetrahydrofolate ligase (570 aa).

65-72 is an ATP binding site; sequence TPHGEGKT.

This sequence belongs to the formate--tetrahydrofolate ligase family.

The enzyme catalyses (6S)-5,6,7,8-tetrahydrofolate + formate + ATP = (6R)-10-formyltetrahydrofolate + ADP + phosphate. The protein operates within one-carbon metabolism; tetrahydrofolate interconversion. The chain is Formate--tetrahydrofolate ligase from Shewanella oneidensis (strain ATCC 700550 / JCM 31522 / CIP 106686 / LMG 19005 / NCIMB 14063 / MR-1).